A 195-amino-acid chain; its full sequence is Transcription factor 15 (195 aa).

A disordered region spans residues 44 to 65 (LEAARRGPGPGSGRRASNGAGP). Low complexity predominate over residues 56 to 65 (GRRASNGAGP). At S60 the chain carries Phosphoserine. A bHLH domain is found at 70–122 (RQRQAANARERDRTQSVNTAFTALRTLIPTEPVDRKLSKIETLRLASSYIAHL).

As to quaternary structure, heterodimer; efficient DNA binding requires dimerization with another bHLH protein, such as TCF3/E12. Interacts with MEOX2. Expressed in heart and skeletal muscle. Specifically expressed in a subpopulation of embryonic stem cells (ESCs), that are still undifferentiated but primed for ifferentiation. Expressed in hematopoietic stem cells (HSCs).

The protein resides in the nucleus. Functionally, early transcription factor that plays a key role in somitogenesis, paraxial mesoderm development and regulation of stem cell pluripotency. Essential for the mesenchymal to epithelial transition associated with somite formation. Required for somite morphogenesis, thereby regulating patterning of the axial skeleton and skeletal muscles. Required for proper localization of somite epithelium markers during the mesenchymal to epithelial transition. Also plays a key role in regulation of stem cell pluripotency. Promotes pluripotency exit of embryonic stem cells (ESCs) by priming ESCs for differentiation. Acts as a key regulator of self-renewal of hematopoietic stem cells (HSCs) by mediating HSCs quiescence and long-term self-renewal. Together with MEOX2, regulates transcription in heart endothelial cells to regulate fatty acid transport across heart endothelial cells. Acts by forming a heterodimer with another helix-loop-helix (bHLH) protein, such as TCF3/E12, that binds DNA on E-box motifs (5'-CANNTG-3') and activates transcription of target genes. The protein is Transcription factor 15 of Mus musculus (Mouse).